A 245-amino-acid chain; its full sequence is UPF0280 protein UNCMA_16740 (245 aa).

This sequence belongs to the UPF0280 family.

The chain is UPF0280 protein UNCMA_16740 from Methanocella arvoryzae (strain DSM 22066 / NBRC 105507 / MRE50).